The following is a 506-amino-acid chain: UDP-N-acetylglucosamine--peptide N-acetylglucosaminyltransferase GtfA subunit (506 aa).

Position 16–19 (16–19 (GVEY)) interacts with UDP. Position 241 (His241) interacts with N-acetyl-D-glucosamine. 384–385 (HK) contacts UDP. Position 404 to 407 (404 to 407 (EGFG)) interacts with N-acetyl-D-glucosamine.

This sequence belongs to the glycosyltransferase group 1 family. Glycosyltransferase 4 subfamily. As to quaternary structure, interacts with stabilizing protein GtfB (Gtf2), probably as a heterotetramer with 2 subunits each of GtfA and GtfB, part of the accessory SecA2/SecY2 protein translocation apparatus.

It localises to the cytoplasm. Its subcellular location is the cell membrane. The enzyme catalyses L-seryl-[protein] + UDP-N-acetyl-alpha-D-glucosamine = 3-O-[N-acetyl-alpha-D-glucosaminyl]-L-seryl-[protein] + UDP + H(+). The protein operates within protein modification; protein glycosylation. In terms of biological role, required for polymorphic O-glycosylation of the serine-rich repeat protein Srr2. Catalyzes the first step in glycosylation by transferring N-acetylglucosamine from UDP-GlcNAc to serine residues of Srr2. Part of the accessory SecA2/SecY2 system specifically required to export serine-rich repeat proteins, probably Srr2 in this organism. The GtfA-GtfB (Gtf1-Gtf2 in this bacteria) complex adds GlcNAc from UDP-GlcNAc to Srr2 substrate. This subunit has low glycosyltransferase activity; GtfB enhances glycosyltransferase activity in vitro. Upon expression in S.parasanguis GtfA/GtfB restores expression of serine-rich repeat protein Fap1 and complements a biofilm formation defect. The protein is UDP-N-acetylglucosamine--peptide N-acetylglucosaminyltransferase GtfA subunit of Streptococcus agalactiae.